A 516-amino-acid chain; its full sequence is Homeobox protein 6 (516 aa).

The span at 22–31 shows a compositional bias: low complexity; sequence NYDFDNKNNS. Disordered stretches follow at residues 22-140, 200-256, and 268-348; these read NYDF…PNCN, SLNN…SSPS, and DEND…NNGD. A compositionally biased stretch (gly residues) spans 32–41; sequence IGGGGGGGGS. 3 stretches are compositionally biased toward low complexity: residues 42 to 59, 66 to 78, and 101 to 132; these read SSSRSSSSRSSSNRSSSG, SNSSSSINNIINS, and TTTTTTTTTTTTTTTTTKNENISSSESENSSS. Low complexity predominate over residues 284 to 346; the sequence is NNNNNNNNNN…NNNNTNTNNN (63 aa). DNA-binding regions (homeobox) lie at residues 362-421 and 424-483; these read KSGQ…SKSG and SYAK…NKLS. The segment at 483 to 516 is disordered; that stretch reads SSKAIQDKDNQDNDNNNSNNNENNDDSYSDEGLF. Positions 495-504 are enriched in low complexity; it reads NDNNNSNNNE. Over residues 505–516 the composition is skewed to acidic residues; the sequence is NNDDSYSDEGLF.

It localises to the nucleus. Functionally, putative transcription factor. The sequence is that of Homeobox protein 6 (hbx6) from Dictyostelium discoideum (Social amoeba).